The chain runs to 365 residues: Phospho-N-acetylmuramoyl-pentapeptide-transferase (365 aa).

11 consecutive transmembrane segments (helical) span residues 15–35 (WPAA…DRLI), 39–59 (LLSL…WWGV), 84–104 (GTPT…GGLV), 114–134 (LLAI…DDWS), 156–176 (AAVL…TVSL), 178–198 (FNLD…VFLA), 209–229 (LDGL…LQLM), 235–255 (GDPA…GFLI), 263–283 (VFMG…VALL), 291–311 (LLMG…VWVF), and 343–363 (VVVP…LGLH).

This sequence belongs to the glycosyltransferase 4 family. MraY subfamily. Mg(2+) serves as cofactor.

The protein resides in the cell inner membrane. It catalyses the reaction UDP-N-acetyl-alpha-D-muramoyl-L-alanyl-gamma-D-glutamyl-meso-2,6-diaminopimeloyl-D-alanyl-D-alanine + di-trans,octa-cis-undecaprenyl phosphate = di-trans,octa-cis-undecaprenyl diphospho-N-acetyl-alpha-D-muramoyl-L-alanyl-D-glutamyl-meso-2,6-diaminopimeloyl-D-alanyl-D-alanine + UMP. The protein operates within cell wall biogenesis; peptidoglycan biosynthesis. In terms of biological role, catalyzes the initial step of the lipid cycle reactions in the biosynthesis of the cell wall peptidoglycan: transfers peptidoglycan precursor phospho-MurNAc-pentapeptide from UDP-MurNAc-pentapeptide onto the lipid carrier undecaprenyl phosphate, yielding undecaprenyl-pyrophosphoryl-MurNAc-pentapeptide, known as lipid I. This chain is Phospho-N-acetylmuramoyl-pentapeptide-transferase, found in Synechococcus sp. (strain WH7803).